The sequence spans 299 residues: Acetaldehyde dehydrogenase 6 (299 aa).

Cys-125 functions as the Acyl-thioester intermediate in the catalytic mechanism. NAD(+) is bound by residues 156–164 (GAGPGTRAN) and Asn-275.

It belongs to the acetaldehyde dehydrogenase family.

It carries out the reaction acetaldehyde + NAD(+) + CoA = acetyl-CoA + NADH + H(+). This Rhodococcus jostii (strain RHA1) protein is Acetaldehyde dehydrogenase 6 (hpdG).